The sequence spans 567 residues: Dihydrolipoyl dehydrogenase 2, chloroplastic (567 aa).

Residues 1-67 constitute a chloroplast transit peptide; that stretch reads MQSVLSLSFS…HIQSRRIEVS (67 aa). Residues 114–122, Lys131, Gly197, and 221–223 each bind FAD; these read EGDVVGGTC and TGS. A disulfide bond links Cys122 and Cys127. NAD(+) contacts are provided by residues 258 to 265, Glu281, and Gly354; that span reads GSGYIGLE. Residues Asp400 and 406-409 each bind FAD; that span reads MLAH. His536 acts as the Proton acceptor in catalysis.

It belongs to the class-I pyridine nucleotide-disulfide oxidoreductase family. Homodimer. Part of the plastidial pyruvate dehydrogenase complex (PDC) containing multiple copies of three enzymatic components: pyruvate dehydrogenase (E1), dihydrolipoamide acetyltransferase (E2) and lipoamide dehydrogenase (E3). Requires FAD as cofactor. Expressed mainly in flower buds and immature siliques, and to a lesser extent in flowers.

It localises to the plastid. The protein resides in the chloroplast stroma. The catalysed reaction is N(6)-[(R)-dihydrolipoyl]-L-lysyl-[protein] + NAD(+) = N(6)-[(R)-lipoyl]-L-lysyl-[protein] + NADH + H(+). Functionally, lipoamide dehydrogenase is a component of the plastidial pyruvate dehydrogenase complex (PDC). This chain is Dihydrolipoyl dehydrogenase 2, chloroplastic (LPD2), found in Arabidopsis thaliana (Mouse-ear cress).